The primary structure comprises 885 residues: Translation initiation factor IF-2 (885 aa).

Over residues Glu-123 to Ile-232 the composition is skewed to basic and acidic residues. Positions Glu-123 to Met-289 are disordered. Positions Gly-253 to Arg-266 are enriched in basic residues. Over residues Gly-267–Glu-276 the composition is skewed to basic and acidic residues. The tr-type G domain occupies Pro-385 to Lys-554. A G1 region spans residues Gly-394–Thr-401. Gly-394–Thr-401 serves as a coordination point for GTP. A G2 region spans residues Gly-419–His-423. Residues Asp-440–Gly-443 are G3. Residues Asp-440–His-444 and Asn-494–Asp-497 each bind GTP. The interval Asn-494–Asp-497 is G4. Positions Ser-530–Lys-532 are G5.

Belongs to the TRAFAC class translation factor GTPase superfamily. Classic translation factor GTPase family. IF-2 subfamily.

It localises to the cytoplasm. Functionally, one of the essential components for the initiation of protein synthesis. Protects formylmethionyl-tRNA from spontaneous hydrolysis and promotes its binding to the 30S ribosomal subunits. Also involved in the hydrolysis of GTP during the formation of the 70S ribosomal complex. The protein is Translation initiation factor IF-2 of Shewanella oneidensis (strain ATCC 700550 / JCM 31522 / CIP 106686 / LMG 19005 / NCIMB 14063 / MR-1).